A 482-amino-acid polypeptide reads, in one-letter code: 2-succinylbenzoate--CoA ligase (482 aa).

The protein belongs to the ATP-dependent AMP-binding enzyme family. MenE subfamily.

The catalysed reaction is 2-succinylbenzoate + ATP + CoA = 2-succinylbenzoyl-CoA + AMP + diphosphate. It functions in the pathway quinol/quinone metabolism; 1,4-dihydroxy-2-naphthoate biosynthesis; 1,4-dihydroxy-2-naphthoate from chorismate: step 5/7. It participates in quinol/quinone metabolism; menaquinone biosynthesis. Its function is as follows. Converts 2-succinylbenzoate (OSB) to 2-succinylbenzoyl-CoA (OSB-CoA). The chain is 2-succinylbenzoate--CoA ligase from Bacillus cereus (strain ATCC 14579 / DSM 31 / CCUG 7414 / JCM 2152 / NBRC 15305 / NCIMB 9373 / NCTC 2599 / NRRL B-3711).